Reading from the N-terminus, the 269-residue chain is tRNA (guanine-N(1)-)-methyltransferase (269 aa).

S-adenosyl-L-methionine-binding positions include G115 and 139 to 144 (LGDYVL).

This sequence belongs to the RNA methyltransferase TrmD family. In terms of assembly, homodimer.

It localises to the cytoplasm. It carries out the reaction guanosine(37) in tRNA + S-adenosyl-L-methionine = N(1)-methylguanosine(37) in tRNA + S-adenosyl-L-homocysteine + H(+). Specifically methylates guanosine-37 in various tRNAs. This is tRNA (guanine-N(1)-)-methyltransferase from Pseudarthrobacter chlorophenolicus (strain ATCC 700700 / DSM 12829 / CIP 107037 / JCM 12360 / KCTC 9906 / NCIMB 13794 / A6) (Arthrobacter chlorophenolicus).